The following is a 192-amino-acid chain: Riboflavin kinase (192 aa).

Mg(2+)-binding residues include Thr47 and Asn49. Catalysis depends on Glu129, which acts as the Nucleophile.

Belongs to the flavokinase family. Zn(2+) is required as a cofactor. It depends on Mg(2+) as a cofactor.

The enzyme catalyses riboflavin + ATP = FMN + ADP + H(+). Its pathway is cofactor biosynthesis; FMN biosynthesis; FMN from riboflavin (ATP route): step 1/1. In terms of biological role, catalyzes the phosphorylation of riboflavin (vitamin B2) to form flavin mononucleotide (FMN) coenzyme. The chain is Riboflavin kinase (FMN1) from Yarrowia lipolytica (strain CLIB 122 / E 150) (Yeast).